The primary structure comprises 97 residues: UPF0729 protein GD16342 (97 aa).

A disordered region spans residues 64–97; the sequence is KPEKASVGPAEESQNPPLNAIAAETEVDESKKEI. S69 carries the phosphoserine modification.

It belongs to the UPF0729 family.

This is UPF0729 protein GD16342 from Drosophila simulans (Fruit fly).